Consider the following 159-residue polypeptide: Phosphopantetheine adenylyltransferase (159 aa).

Serine 8 contributes to the substrate binding site. ATP-binding positions include 8–9 (SF) and histidine 16. Positions 40, 72, and 86 each coordinate substrate. ATP-binding positions include 87-89 (GLR), glutamate 97, and 122-128 (YSFLSSS).

It belongs to the bacterial CoaD family. In terms of assembly, homohexamer. The cofactor is Mg(2+).

The protein resides in the cytoplasm. It catalyses the reaction (R)-4'-phosphopantetheine + ATP + H(+) = 3'-dephospho-CoA + diphosphate. Its pathway is cofactor biosynthesis; coenzyme A biosynthesis; CoA from (R)-pantothenate: step 4/5. Reversibly transfers an adenylyl group from ATP to 4'-phosphopantetheine, yielding dephospho-CoA (dPCoA) and pyrophosphate. The sequence is that of Phosphopantetheine adenylyltransferase from Synechocystis sp. (strain ATCC 27184 / PCC 6803 / Kazusa).